A 164-amino-acid polypeptide reads, in one-letter code: Oocyte-expressed protein homolog (164 aa).

Residues proline 44–leucine 105 form the KH; atypical domain.

Belongs to the KHDC1 family. In terms of assembly, component of the subcortical maternal complex (SCMC), at least composed of NLRP5, KHDC3, OOEP, and TLE6. Within the complex, interacts with NLRP5, KHDC3 and TLE6. The SCMC may facilitate translocation of its components between the nuclear and cytoplasmic compartments. As part of the SCMC interacts with the SCMC-associated protein NLRP4F. Forms a scaffold complex with KHDC3/FILIA, and interacts with BLM and TRIM25 at DNA replication forks. In terms of tissue distribution, expressed in ovaries, where it is restricted to growing oocytes, with greatest levels in fully grown oocytes.

The protein resides in the cytoplasm. It is found in the nucleus. In terms of biological role, component of the subcortical maternal complex (SCMC), a multiprotein complex that plays a key role in early embryonic development. The SCMC complex is a structural constituent of cytoplasmic lattices, which consist in fibrous structures found in the cytoplasm of oocytes and preimplantation embryos. They are required to store maternal proteins critical for embryonic development, such as proteins that control epigenetic reprogramming of the preimplantation embryo, and prevent their degradation or activation. As part of the OOEP-KHDC3 scaffold, recruits BLM and TRIM25 to DNA replication forks, thereby promoting the ubiquitination of BLM by TRIM25, enhancing BLM retainment at replication forks and therefore promoting stalled replication fork restart. Positively regulates the homologous recombination-mediated DNA double-strand break (DSB) repair pathway by regulating ATM activation and RAD51 recruitment to DSBs in oocytes. Thereby contributes to oocyte survival and the resumption and completion of meiosis. This is Oocyte-expressed protein homolog from Mus musculus (Mouse).